A 92-amino-acid chain; its full sequence is MKLLLAIALMLTIVMWVSTQQPQAVHTYCGRHLARTLADLCWEAGVDKRSDAQYASYGSAWLMPYSEGRGKRGIVDECCLRPCSVDVLLSYC.

Positions 1-19 (MKLLLAIALMLTIVMWVST) are cleaved as a signal peptide. Q20 carries the pyrrolidone carboxylic acid modification. 3 disulfides stabilise this stretch: C29-C79, C41-C92, and C78-C83. The propeptide at 50–70 (SDAQYASYGSAWLMPYSEGRG) is c peptide like.

This sequence belongs to the insulin family. Heterodimer of a B chain and an A chain linked by two disulfide bonds.

Its subcellular location is the secreted. Brain peptide responsible for activation of prothoracic glands to produce ecdysone in insects. The protein is Bombyxin A-7 (BBXA7) of Bombyx mori (Silk moth).